We begin with the raw amino-acid sequence, 198 residues long: Probable GTP-binding protein EngB (198 aa).

The 174-residue stretch at 22–195 folds into the EngB-type G domain; that stretch reads GHPEIAFLGR…WSWLEQTAGL (174 aa). GTP contacts are provided by residues 30–37, 57–61, 75–78, 142–145, and 174–176; these read GRSNVGKS, GKTQT, DVPG, TKID, and FSA. Ser37 and Thr59 together coordinate Mg(2+).

The protein belongs to the TRAFAC class TrmE-Era-EngA-EngB-Septin-like GTPase superfamily. EngB GTPase family. Mg(2+) is required as a cofactor.

Functionally, necessary for normal cell division and for the maintenance of normal septation. The sequence is that of Probable GTP-binding protein EngB from Lacticaseibacillus paracasei (strain ATCC 334 / BCRC 17002 / CCUG 31169 / CIP 107868 / KCTC 3260 / NRRL B-441) (Lactobacillus paracasei).